A 160-amino-acid chain; its full sequence is Large ribosomal subunit protein uL22c (160 aa).

It belongs to the universal ribosomal protein uL22 family. In terms of assembly, part of the 50S ribosomal subunit.

It is found in the plastid. Its subcellular location is the chloroplast. In terms of biological role, this protein binds specifically to 23S rRNA. Its function is as follows. The globular domain of the protein is located near the polypeptide exit tunnel on the outside of the subunit, while an extended beta-hairpin is found that lines the wall of the exit tunnel in the center of the 70S ribosome. The polypeptide is Large ribosomal subunit protein uL22c (rpl22) (Arabis hirsuta (Hairy rock-cress)).